The primary structure comprises 199 residues: 3-hexulose-6-phosphate isomerase (199 aa).

The 143-residue stretch at 44–186 (LARQIVQPGR…FQSLWDHTEV (143 aa)) folds into the SIS domain. Residues Ser-62 and 101–106 (SGSGTT) contribute to the substrate site. Glu-166 acts as the Proton acceptor in catalysis.

It belongs to the SIS family. PHI subfamily.

The enzyme catalyses D-arabino-hex-3-ulose 6-phosphate = beta-D-fructose 6-phosphate. Its pathway is one-carbon metabolism; formaldehyde assimilation via RuMP pathway; D-fructose 6-phosphate from D-ribulose 5-phosphate and formaldehyde: step 2/2. Its function is as follows. Catalyzes the isomerization between 3-hexulose 6-phosphate and fructose 6-phosphate. The polypeptide is 3-hexulose-6-phosphate isomerase (rmpB) (Mycobacterium gastri).